The chain runs to 330 residues: MIYVSRRLLITCLLLVSACVVAGIWGLRSGAVTLETSQVFAALMGDAPRSMTMVVTEWRLPRVLMALLIGAALGVSGAIFQSLMRNPLGSPDVMGFNTGAWSGVLVAMVLFGQDLTAIALSAMVGGIVTSLLVWLLAWRNGIDTFRLIIIGIGVRAMLVAFNTWLLLKASLETALTAGLWNAGSLNGLTWAKTSPSAPIIILMLIAAALLVRRMRLLEMGDDTACALGVSVERSRLLMMLVAVVLTAAATALAGPISFIALVAPHIARRISGTARWGLTQAALCGALLLLAADLCAQQLFMPYQLPVGVVTVSLGGIYLIVLLIQESRKK.

The Periplasmic segment spans residues 1-7; sequence MIYVSRR. Residues 8–28 form a helical membrane-spanning segment; that stretch reads LLITCLLLVSACVVAGIWGLR. At 29-62 the chain is on the cytoplasmic side; the sequence is SGAVTLETSQVFAALMGDAPRSMTMVVTEWRLPR. Residues 63 to 83 traverse the membrane as a helical segment; it reads VLMALLIGAALGVSGAIFQSL. At 84 to 92 the chain is on the periplasmic side; the sequence is MRNPLGSPD. A helical membrane pass occupies residues 93–113; the sequence is VMGFNTGAWSGVLVAMVLFGQ. Topologically, residues 114–117 are cytoplasmic; sequence DLTA. The helical transmembrane segment at 118-138 threads the bilayer; that stretch reads IALSAMVGGIVTSLLVWLLAW. The Periplasmic portion of the chain corresponds to 139 to 146; that stretch reads RNGIDTFR. Residues 147–167 form a helical membrane-spanning segment; it reads LIIIGIGVRAMLVAFNTWLLL. Topologically, residues 168–190 are cytoplasmic; that stretch reads KASLETALTAGLWNAGSLNGLTW. Residues 191-211 form a helical membrane-spanning segment; sequence AKTSPSAPIIILMLIAAALLV. Residues 212-235 are Periplasmic-facing; the sequence is RRMRLLEMGDDTACALGVSVERSR. Residues 236–256 traverse the membrane as a helical segment; that stretch reads LLMMLVAVVLTAAATALAGPI. At 257 to 275 the chain is on the cytoplasmic side; that stretch reads SFIALVAPHIARRISGTAR. The helical transmembrane segment at 276-296 threads the bilayer; it reads WGLTQAALCGALLLLAADLCA. Residues 297-303 are Periplasmic-facing; it reads QQLFMPY. A helical transmembrane segment spans residues 304–324; the sequence is QLPVGVVTVSLGGIYLIVLLI. Over 325–330 the chain is Cytoplasmic; the sequence is QESRKK.

It belongs to the binding-protein-dependent transport system permease family. FecCD subfamily. The complex is composed of two ATP-binding proteins (FepC), two transmembrane proteins (FepD and FepG) and a solute-binding protein (FepB).

Its subcellular location is the cell inner membrane. Functionally, part of the ABC transporter complex FepBDGC involved in ferric enterobactin uptake. Responsible for the translocation of the substrate across the membrane. The chain is Ferric enterobactin transport system permease protein FepG (fepG) from Escherichia coli (strain K12).